A 387-amino-acid polypeptide reads, in one-letter code: S-adenosylmethionine synthase (387 aa).

Residue H16 participates in ATP binding. Residue D18 coordinates Mg(2+). E44 serves as a coordination point for K(+). The L-methionine site is built by E57 and Q100. The tract at residues 100–110 is flexible loop; sequence QSPDIAQGVDR. ATP-binding positions include 167–169, 232–233, D241, 247–248, A264, and K268; these read DAK, RF, and RK. An L-methionine-binding site is contributed by D241. K272 serves as a coordination point for L-methionine.

Belongs to the AdoMet synthase family. Homotetramer; dimer of dimers. The cofactor is Mg(2+). K(+) serves as cofactor.

It localises to the cytoplasm. The enzyme catalyses L-methionine + ATP + H2O = S-adenosyl-L-methionine + phosphate + diphosphate. It participates in amino-acid biosynthesis; S-adenosyl-L-methionine biosynthesis; S-adenosyl-L-methionine from L-methionine: step 1/1. In terms of biological role, catalyzes the formation of S-adenosylmethionine (AdoMet) from methionine and ATP. The overall synthetic reaction is composed of two sequential steps, AdoMet formation and the subsequent tripolyphosphate hydrolysis which occurs prior to release of AdoMet from the enzyme. In Cupriavidus metallidurans (strain ATCC 43123 / DSM 2839 / NBRC 102507 / CH34) (Ralstonia metallidurans), this protein is S-adenosylmethionine synthase.